The sequence spans 88 residues: Small ribosomal subunit protein uS17 (88 aa).

It belongs to the universal ribosomal protein uS17 family. Part of the 30S ribosomal subunit.

In terms of biological role, one of the primary rRNA binding proteins, it binds specifically to the 5'-end of 16S ribosomal RNA. The polypeptide is Small ribosomal subunit protein uS17 (Vesicomyosocius okutanii subsp. Calyptogena okutanii (strain HA)).